Here is a 156-residue protein sequence, read N- to C-terminus: ATP synthase subunit b (156 aa).

Residues 7–27 (LFAQIIVFFGLVWFTMKFVWP) traverse the membrane as a helical segment.

Belongs to the ATPase B chain family. F-type ATPases have 2 components, F(1) - the catalytic core - and F(0) - the membrane proton channel. F(1) has five subunits: alpha(3), beta(3), gamma(1), delta(1), epsilon(1). F(0) has three main subunits: a(1), b(2) and c(10-14). The alpha and beta chains form an alternating ring which encloses part of the gamma chain. F(1) is attached to F(0) by a central stalk formed by the gamma and epsilon chains, while a peripheral stalk is formed by the delta and b chains.

Its subcellular location is the cell inner membrane. F(1)F(0) ATP synthase produces ATP from ADP in the presence of a proton or sodium gradient. F-type ATPases consist of two structural domains, F(1) containing the extramembraneous catalytic core and F(0) containing the membrane proton channel, linked together by a central stalk and a peripheral stalk. During catalysis, ATP synthesis in the catalytic domain of F(1) is coupled via a rotary mechanism of the central stalk subunits to proton translocation. Its function is as follows. Component of the F(0) channel, it forms part of the peripheral stalk, linking F(1) to F(0). The chain is ATP synthase subunit b from Neisseria gonorrhoeae (strain NCCP11945).